A 483-amino-acid chain; its full sequence is Uridine/cytidine kinase UKL1, chloroplastic (483 aa).

A chloroplast-targeting transit peptide spans 1 to 47 (MPEDSTAIDYVMEKASGPHFSGLRLDGLLSSPSKSSVSSPSHFRLSN). The tract at residues 59–264 (PHQPFVIGVT…IVQHIHTKLG (206 aa)) is uridine kinase. The segment at 274-483 (NVFVIETTFQ…FGDRYFGTDE (210 aa)) is uracil phosphoribosyltransferase. Residues lysine 298, arginine 307, and 341 to 344 (CKKL) contribute to the GTP site. 5-phospho-alpha-D-ribose 1-diphosphate contacts are provided by arginine 351 and arginine 376. Arginine 396 is a GTP binding site. 5-phospho-alpha-D-ribose 1-diphosphate contacts are provided by residues aspartate 402, 407 to 410 (TGNS), and glutamate 473. 472–474 (GEF) lines the uracil pocket.

This sequence in the N-terminal section; belongs to the uridine kinase family. The protein in the C-terminal section; belongs to the UPRTase family.

Its subcellular location is the plastid. The protein localises to the chloroplast. It catalyses the reaction cytidine + ATP = CMP + ADP + H(+). It carries out the reaction uridine + ATP = UMP + ADP + H(+). The protein operates within pyrimidine metabolism; CTP biosynthesis via salvage pathway; CTP from cytidine: step 1/3. It functions in the pathway pyrimidine metabolism; UMP biosynthesis via salvage pathway; UMP from uridine: step 1/1. Involved in the pyrimidine salvage pathway. Phosphorylates uridine to uridine monophosphate (UMP). Phosphorylates cytidine to cytidine monophosphate (CMP). Does not possess uracil phosphoribosyltransferase (UPRTase) activity that catalyzes the conversion of uracil and 5-phospho-alpha-D-ribose 1-diphosphate (PRPP) to UMP and diphosphate. This is Uridine/cytidine kinase UKL1, chloroplastic from Arabidopsis thaliana (Mouse-ear cress).